A 477-amino-acid polypeptide reads, in one-letter code: MGNVPLLREVGKCQRNMFGRSTASSKGSSNSRSSSSTSPKKGPRREADALMFIQIFIHLLKSNIGTGFLGLPLAVKNAGLLVGPVSLLAIGALTVHCMDILLNCACHLTQRLQRSFVNYEETTMYSLETCPSPWLRTHSVWGRYVVSFLLIVTQLGFCSVYFMFLADNLQQIMEEAHFTSNVCQPRQSLVMTSILDTRFYMLTILPFLILLVLIQNPQVLSIFSTLATITTLSSLALIFEYLIQTPHHSNLPLVANWKTFLLFFGTAIFTFEGVGMVLPLKSQMKSPQQFPAVLYLGMSFVIFLYICLGTLGYMKFGTDTQASITLNLPICWLYQSVKLMYSVGIFFTYALQFHVPAEIIVPYVVSRVSENWALFVDLTVRTALVCLTCFSAVLIPRLDLVISLVGSVSSSALAIIIPPLLEIATFYSENISCATIVKDIMISILGLLGCVLGTYQALYEMTQQTHFYMANSTRVHI.

The Cytoplasmic segment spans residues 1–54; the sequence is MGNVPLLREVGKCQRNMFGRSTASSKGSSNSRSSSSTSPKKGPRREADALMFIQ. Positions 19-40 are enriched in low complexity; sequence GRSTASSKGSSNSRSSSSTSPK. The disordered stretch occupies residues 19 to 43; it reads GRSTASSKGSSNSRSSSSTSPKKGP. A helical membrane pass occupies residues 55-75; that stretch reads IFIHLLKSNIGTGFLGLPLAV. Over 76 to 77 the chain is Extracellular; sequence KN. A helical membrane pass occupies residues 78–98; that stretch reads AGLLVGPVSLLAIGALTVHCM. The Cytoplasmic portion of the chain corresponds to 99 to 144; sequence DILLNCACHLTQRLQRSFVNYEETTMYSLETCPSPWLRTHSVWGRY. The chain crosses the membrane as a helical span at residues 145–165; it reads VVSFLLIVTQLGFCSVYFMFL. Residues 166-202 lie on the Extracellular side of the membrane; that stretch reads ADNLQQIMEEAHFTSNVCQPRQSLVMTSILDTRFYML. Residues 203-223 form a helical membrane-spanning segment; it reads TILPFLILLVLIQNPQVLSIF. Over 224-225 the chain is Cytoplasmic; it reads ST. Residues 226–246 form a helical membrane-spanning segment; that stretch reads LATITTLSSLALIFEYLIQTP. Residues 247–259 lie on the Extracellular side of the membrane; the sequence is HHSNLPLVANWKT. A helical transmembrane segment spans residues 260 to 280; it reads FLLFFGTAIFTFEGVGMVLPL. Residues 281 to 291 lie on the Cytoplasmic side of the membrane; sequence KSQMKSPQQFP. A helical transmembrane segment spans residues 292-312; the sequence is AVLYLGMSFVIFLYICLGTLG. Over 313-344 the chain is Extracellular; that stretch reads YMKFGTDTQASITLNLPICWLYQSVKLMYSVG. A helical transmembrane segment spans residues 345–365; that stretch reads IFFTYALQFHVPAEIIVPYVV. Topologically, residues 366 to 374 are cytoplasmic; the sequence is SRVSENWAL. The helical transmembrane segment at 375–395 threads the bilayer; sequence FVDLTVRTALVCLTCFSAVLI. The Extracellular segment spans residues 396–399; the sequence is PRLD. Residues 400–420 traverse the membrane as a helical segment; it reads LVISLVGSVSSSALAIIIPPL. At 421–432 the chain is on the cytoplasmic side; that stretch reads LEIATFYSENIS. Residues 433-453 traverse the membrane as a helical segment; the sequence is CATIVKDIMISILGLLGCVLG. At 454–477 the chain is on the extracellular side; the sequence is TYQALYEMTQQTHFYMANSTRVHI.

This sequence belongs to the amino acid/polyamine transporter 2 family. Specifically expressed in testis.

It is found in the membrane. The protein is Proton-coupled amino acid transporter 3 (Slc36a3) of Mus musculus (Mouse).